The chain runs to 507 residues: Maturase K (507 aa).

This sequence belongs to the intron maturase 2 family. MatK subfamily.

Its subcellular location is the plastid. It localises to the chloroplast. In terms of biological role, usually encoded in the trnK tRNA gene intron. Probably assists in splicing its own and other chloroplast group II introns. The polypeptide is Maturase K (Cupaniopsis anacardioides (Carrotwood)).